Consider the following 267-residue polypeptide: Indole-3-glycerol phosphate synthase (267 aa).

The protein belongs to the TrpC family.

It catalyses the reaction 1-(2-carboxyphenylamino)-1-deoxy-D-ribulose 5-phosphate + H(+) = (1S,2R)-1-C-(indol-3-yl)glycerol 3-phosphate + CO2 + H2O. It participates in amino-acid biosynthesis; L-tryptophan biosynthesis; L-tryptophan from chorismate: step 4/5. This Dichelobacter nodosus (strain VCS1703A) protein is Indole-3-glycerol phosphate synthase.